A 164-amino-acid polypeptide reads, in one-letter code: Phosphopantetheine adenylyltransferase (164 aa).

Residue Thr-9 participates in substrate binding. ATP is bound by residues 9-10 (TF) and His-17. Residues Lys-41, Leu-73, and Arg-87 each contribute to the substrate site. ATP-binding positions include 88 to 90 (GLR), Glu-98, and 123 to 129 (YMFISAT).

It belongs to the bacterial CoaD family. Homohexamer. Requires Mg(2+) as cofactor.

Its subcellular location is the cytoplasm. The catalysed reaction is (R)-4'-phosphopantetheine + ATP + H(+) = 3'-dephospho-CoA + diphosphate. Its pathway is cofactor biosynthesis; coenzyme A biosynthesis; CoA from (R)-pantothenate: step 4/5. Functionally, reversibly transfers an adenylyl group from ATP to 4'-phosphopantetheine, yielding dephospho-CoA (dPCoA) and pyrophosphate. In Nitrosomonas eutropha (strain DSM 101675 / C91 / Nm57), this protein is Phosphopantetheine adenylyltransferase.